Consider the following 251-residue polypeptide: Small ribosomal subunit protein uS2 (251 aa).

It belongs to the universal ribosomal protein uS2 family.

The sequence is that of Small ribosomal subunit protein uS2 from Chlorobium chlorochromatii (strain CaD3).